A 75-amino-acid chain; its full sequence is Mitochondrial import receptor subunit TOM7-1 (75 aa).

Position 1 is an N-acetylmethionine (methionine 1). A disordered region spans residues 1–28 (MESTISLKVNKGKGKGSKGASSSDDKSK). The Cytoplasmic segment spans residues 1-46 (MESTISLKVNKGKGKGSKGASSSDDKSKFDVVKEWTNWSLKKAKVV). Residues 47 to 64 (THYGFIPLVIFVGMNSDP) form a helical membrane-spanning segment. Topologically, residues 65–75 (KPHLFQLLSPV) are mitochondrial intermembrane.

The protein belongs to the Tom7 family. Forms part of the preprotein translocase complex of the outer mitochondrial membrane (TOM complex) which consists of at least 6 different proteins (TOM5, TOM6, TOM7, TOM20, TOM22/TOM9 and TOM40). In terms of tissue distribution, expressed in roots, flowers, young cotyledons and leaves.

It is found in the mitochondrion outer membrane. Functionally, seems to act as a modulator of the dynamics of the mitochondrial protein transport machinery. Seems to promote the dissociation of subunits of the outer membrane translocase. The sequence is that of Mitochondrial import receptor subunit TOM7-1 (TOM7-1) from Arabidopsis thaliana (Mouse-ear cress).